Consider the following 366-residue polypeptide: MISSFHRPTVARVNLQAIKENVASVQKHIPLGVKTYAVVKADAYGHGAVQVSKALLPQVDGYCVSNLDEALQLRQAGIDKEILILGVLLPNELKLAITRQVTVTVASLEWLAMAKQEWPDLKGLKVHIKIDSGMGRIGLRSVTEVDNLIAGLKSMGADVEGIFTHFATADEADDTKFNQQLQFFKKLIAGLEDKPRLVHASNSATSIWHSDTIFNAVRLGIVSYGLNPSGSDLSLPFPLQEALSLESSLVHVKMISAGDTVGYGATYTAKKSEYVGTVPIGYADGWTRNMQGFSVLVDGQFCEIIGRVSMDQLTIRLSKAYPLGTKVTLIGSNQQKNISTTDIANYRNTINYEVLCLLSDRIPRIY.

The active-site Proton acceptor; specific for D-alanine is Lys-40. Lys-40 is subject to N6-(pyridoxal phosphate)lysine. Arg-136 provides a ligand contact to substrate. Tyr-263 functions as the Proton acceptor; specific for L-alanine in the catalytic mechanism. Met-310 provides a ligand contact to substrate.

Belongs to the alanine racemase family. Requires pyridoxal 5'-phosphate as cofactor.

It catalyses the reaction L-alanine = D-alanine. Its pathway is amino-acid biosynthesis; D-alanine biosynthesis; D-alanine from L-alanine: step 1/1. Catalyzes the interconversion of L-alanine and D-alanine. May also act on other amino acids. The sequence is that of Alanine racemase (alr) from Streptococcus pyogenes serotype M6 (strain ATCC BAA-946 / MGAS10394).